A 196-amino-acid chain; its full sequence is MEDYIIDFLIKFQKLIAKNVKIQHLGIENVKRICGTDIAYKGNIGYAVAVKEEEGKIEYNLVKGDVFFPYIPTFLFVREAPLMIKAVEKYECDLILVDGHGLTHPRKSGIATVIGVLLDKPTIGVAKSRLTGDLVVENNITYVILHGEKLGVKVGKYFFSIGNKTDLSDVIDLAKKGYPKVLKLADKLSKDLKKKE.

Residues D37 and D98 each contribute to the Mg(2+) site.

Belongs to the endonuclease V family. The cofactor is Mg(2+).

The protein localises to the cytoplasm. It catalyses the reaction Endonucleolytic cleavage at apurinic or apyrimidinic sites to products with a 5'-phosphate.. Its function is as follows. DNA repair enzyme involved in the repair of deaminated bases. Selectively cleaves double-stranded DNA at the second phosphodiester bond 3' to a deoxyinosine leaving behind the intact lesion on the nicked DNA. This Sulfurisphaera tokodaii (strain DSM 16993 / JCM 10545 / NBRC 100140 / 7) (Sulfolobus tokodaii) protein is Endonuclease V.